Here is a 522-residue protein sequence, read N- to C-terminus: Monogalactosyldiacylglycerol synthase, chloroplastic (522 aa).

A chloroplast-targeting transit peptide spans 1–98 (MSHPSTVTSE…RIPLGFSSIG (98 aa)).

It belongs to the glycosyltransferase 28 family. In terms of assembly, homodimer. It depends on Zn(2+) as a cofactor.

It is found in the plastid. Its subcellular location is the chloroplast inner membrane. It catalyses the reaction a 1,2-diacyl-sn-glycerol + UDP-alpha-D-galactose = a 1,2-diacyl-3-O-(beta-D-galactosyl)-sn-glycerol + UDP + H(+). Its activity is regulated as follows. Inhibited by ortho-phenanthroline and UDP (competitive inhibitor relatively to UDP-Gal only) and inactivated by citraconic anhydride, tert-butoxycarbonyl-L-methionine hydrosuccinimidyl ester (SLR) and N-ethylmaleimide (NEM). Its function is as follows. Involved in the synthesis of the major structural component of photosynthetic membranes. The 1,2-diacylglycerol substrate preference is 18:2/18:2 &gt; 18:0/18:1 &gt; 18:1/18:1 &gt; 18:1/16:0 &gt; 16:0/18:2 &gt; 18:3/18:3 &gt; 16:0/18:1 &gt; 16:0/16:0 &gt; 18:0/18:0. The sequence is that of Monogalactosyldiacylglycerol synthase, chloroplastic (MGD A) from Spinacia oleracea (Spinach).